A 182-amino-acid polypeptide reads, in one-letter code: Mid1-interacting protein 1 (182 aa).

Residue methionine 1 is modified to N-acetylmethionine. The segment at 55 to 75 (VGGSGGCLEERTTPAPSPGSA) is disordered. Phosphoserine is present on residues serine 71, serine 74, and serine 78.

It belongs to the SPOT14 family. As to quaternary structure, homodimer in the absence of THRSP. Heterodimer with THRSP. The homodimer interacts with ACACA and ACACB. Promotes polymerization of Acetyl-CoA carboxylase to form complexes that contain MID1IP1 and ACACA and/or ACACB. Interaction with THRSP interferes with ACACA binding. As to expression, during embryonic development, expressed mainly in the neuroepithelial midline, urogenital apparatus and digits. Detected in adult white fat, liver, heart, brain and kidney. Expressed at very low levels in lactating mammary gland.

The protein resides in the nucleus. It localises to the cytoplasm. It is found in the cytoskeleton. Functionally, plays a role in the regulation of lipogenesis in liver. Up-regulates ACACA enzyme activity. Required for efficient lipid biosynthesis, including triacylglycerol, diacylglycerol and phospholipid. Involved in stabilization of microtubules. The protein is Mid1-interacting protein 1 (Mid1ip1) of Mus musculus (Mouse).